Reading from the N-terminus, the 435-residue chain is 5-methylthioadenosine/S-adenosylhomocysteine deaminase (435 aa).

2 residues coordinate Zn(2+): His-65 and His-67. Residues Glu-94, Arg-150, and His-189 each contribute to the substrate site. His-216 contacts Zn(2+). The substrate site is built by Glu-219 and Asp-304. Asp-304 is a Zn(2+) binding site.

Belongs to the metallo-dependent hydrolases superfamily. MTA/SAH deaminase family. The cofactor is Zn(2+).

It carries out the reaction S-adenosyl-L-homocysteine + H2O + H(+) = S-inosyl-L-homocysteine + NH4(+). The catalysed reaction is S-methyl-5'-thioadenosine + H2O + H(+) = S-methyl-5'-thioinosine + NH4(+). In terms of biological role, catalyzes the deamination of 5-methylthioadenosine and S-adenosyl-L-homocysteine into 5-methylthioinosine and S-inosyl-L-homocysteine, respectively. Is also able to deaminate adenosine. The chain is 5-methylthioadenosine/S-adenosylhomocysteine deaminase from Bacillus cereus (strain 03BB102).